Consider the following 348-residue polypeptide: D-alanine--D-alanine ligase (348 aa).

The region spanning 132–334 (KRVLESAGIP…YAELIEELVR (203 aa)) is the ATP-grasp domain. ATP is bound at residue 162 to 217 (EAVLSYPVFVKPANMGSSVGISKAESEEELRAAILLALTYDSRILIEQGVLAREIE). Residues Asp288, Glu301, and Asn303 each coordinate Mg(2+).

It belongs to the D-alanine--D-alanine ligase family. Requires Mg(2+) as cofactor. Mn(2+) serves as cofactor.

The protein resides in the cytoplasm. It catalyses the reaction 2 D-alanine + ATP = D-alanyl-D-alanine + ADP + phosphate + H(+). The protein operates within cell wall biogenesis; peptidoglycan biosynthesis. Cell wall formation. This Streptococcus equi subsp. equi (strain 4047) protein is D-alanine--D-alanine ligase.